The primary structure comprises 642 residues: Protein INCREASED PETAL GROWTH ANISOTROPY 1 (642 aa).

The interval 1–60 is disordered; it reads MVAGKVRVTMGFHKSPSTKKTKDMPSPLPLPPPPPPPLKPPSSGSATTKPPINPSKPGFT. The segment covering 26–40 has biased composition (pro residues); sequence SPLPLPPPPPPPLKP. Positions 80–183 form a coiled coil; that stretch reads AASHNGVVSE…EAEIVELRKL (104 aa). Residues 223 to 351 form a disordered region; sequence NLPEPITNQE…PPKSLSIASA (129 aa). Over residues 247–256 the composition is skewed to basic and acidic residues; the sequence is DIYRKDEIES. A compositionally biased stretch (low complexity) spans 258 to 277; that stretch reads SRSSNSEELTESSSLSTVRS. The segment covering 302 to 344 has biased composition (pro residues); it reads DPPPQKSIPPPPPPPPPPLLQQPPPPPSVSKAPPPPPPPPPPK.

It belongs to the IPGA1 family. In terms of assembly, associates to cortical microtubules via its N-terminal region. Interacts with ANGUSTIFOLIA (AN) on microtubule upon mechanical stress to regulate microtubule organization. Binds to the microtubule-severing enzyme KATANIN (KTN1). Expressed ubiquitously at all development stages, with highest in developing petals. During mechanical stress, accumulates in granules on microtubules.

The protein resides in the cytoplasm. Its subcellular location is the cytoskeleton. It localises to the cytosol. It is found in the cell membrane. Microtubule-associated protein involved in the regulation of anisotropic petal and cotyledons growth and shape by affecting cortical microtubule organization. Prevents cortical microtubules organization into parallel arrays oriented perpendicular to the axis of cell elongation thus limiting anisotropic cell growth in the late phases of petal development. Cooperatively with ANGUSTIFOLIA (AN), negatively regulates cortical microtubules (CMTs) organization in response to mechanical stress and modulates pavement cells morphogenesis leading to puzzle shape, probably in an AAA1/KTN1-dependent manner. The chain is Protein INCREASED PETAL GROWTH ANISOTROPY 1 from Arabidopsis thaliana (Mouse-ear cress).